The chain runs to 226 residues: Apoptosis regulator OPG045 (226 aa).

This sequence belongs to the orthopoxvirus OPG045 family. In terms of assembly, homodimer. Interacts with host pro-apoptotic protein BCL2L11 (via BH3 domain). Interacts with host NLRP1. Interacts with host BAK.

Its subcellular location is the host mitochondrion outer membrane. It is found in the host cytoplasm. Plays a role in evading host innate immune response by inhibiting host inflammasome activation. Interacts with and inhibits NLR-mediated interleukin-1 beta/IL1B production in infected cells. At the host mitochondria outer membrane, interacts with the BH3 domain of host BAK and prevents BAK from binding active BAX. In turn, host apoptosis is inhibited. This Homo sapiens (Human) protein is Apoptosis regulator OPG045 (OPG045).